A 274-amino-acid chain; its full sequence is Elongation factor Ts (274 aa).

The interval 82–85 is involved in Mg(2+) ion dislocation from EF-Tu; it reads TDFV.

The protein belongs to the EF-Ts family.

It localises to the cytoplasm. In terms of biological role, associates with the EF-Tu.GDP complex and induces the exchange of GDP to GTP. It remains bound to the aminoacyl-tRNA.EF-Tu.GTP complex up to the GTP hydrolysis stage on the ribosome. The protein is Elongation factor Ts of Flavobacterium psychrophilum (strain ATCC 49511 / DSM 21280 / CIP 103535 / JIP02/86).